Consider the following 592-residue polypeptide: Elongation factor 1 alpha-like protein (592 aa).

Disordered regions lie at residues 1–35 (MSRHRDVKNLDLDDYELDEEPGEEELTEEQEEEFR) and 78–159 (SSKA…KQNP). Acidic residues predominate over residues 12–32 (LDDYELDEEPGEEELTEEQEE). Over residues 82 to 111 (GAKEKQNTDSQKEKKQNKSKEALADAKDPL) the composition is skewed to basic and acidic residues. The segment covering 113 to 124 (ESSNGIKNLSLN) has biased composition (polar residues). Residues 137-151 (VKMKNSSESDNQPEK) show a composition bias toward basic and acidic residues. Positions 175-401 (KPVVHLVVTG…DQLVPPEKPY (227 aa)) constitute a tr-type G domain. Residues 184–191 (GHVDSGKS) form a G1 region. 184–191 (GHVDSGKS) serves as a coordination point for GTP. The segment at 240 to 244 (GVTMD) is G2. The interval 261-264 (DAPG) is G3. GTP is bound by residues 323–326 (NKLD) and 352–355 (FKTS). The segment at 323–326 (NKLD) is G4. Residues 363–365 (SAI) are G5.

This sequence belongs to the TRAFAC class translation factor GTPase superfamily. Classic translation factor GTPase family. Component of the Dom34-Hbs1 complex, also named Pelota-HBS1L complex, composed of dom34 and hbs1.

Its subcellular location is the cytoplasm. The catalysed reaction is GTP + H2O = GDP + phosphate + H(+). Functionally, GTPase component of the Dom34-Hbs1 complex, a complex that recognizes stalled ribosomes and triggers the No-Go Decay (NGD) pathway. The Dom34-Hbs1 complex recognizes ribosomes stalled at the 3' end of an mRNA and engages stalled ribosomes by destabilizing mRNA in the mRNA channel. Following ribosome-binding, the Pelota-HBS1L complex promotes the disassembly of stalled ribosomes, followed by degradation of damaged mRNAs as part of the NGD pathway. This chain is Elongation factor 1 alpha-like protein, found in Schizosaccharomyces pombe (strain 972 / ATCC 24843) (Fission yeast).